The chain runs to 272 residues: Large ribosomal subunit protein uL2cz/uL2cy (272 aa).

Disordered regions lie at residues 1–33 (MAIH…SGQR) and 220–272 (VMNP…RRSK). At alanine 2 the chain carries N-methylalanine. Polar residues predominate over residues 7–30 (KTSTSSTRNGAVQVKSNPRNNLIS).

Belongs to the universal ribosomal protein uL2 family. Component of the chloroplast large ribosomal subunit (LSU). Mature 70S chloroplast ribosomes of higher plants consist of a small (30S) and a large (50S) subunit. The 30S small subunit contains 1 molecule of ribosomal RNA (16S rRNA) and 24 different proteins. The 50S large subunit contains 3 rRNA molecules (23S, 5S and 4.5S rRNA) and 33 different proteins.

The protein localises to the plastid. The protein resides in the chloroplast. In terms of biological role, component of the chloroplast ribosome (chloro-ribosome), a dedicated translation machinery responsible for the synthesis of chloroplast genome-encoded proteins, including proteins of the transcription and translation machinery and components of the photosynthetic apparatus. The sequence is that of Large ribosomal subunit protein uL2cz/uL2cy (rpl2-A) from Spinacia oleracea (Spinach).